A 410-amino-acid polypeptide reads, in one-letter code: Elongation factor Tu, chloroplastic (410 aa).

The region spanning 10–215 (KPHVNIGTIG…NVDSYIPTPE (206 aa)) is the tr-type G domain. The interval 19–26 (GHVDHGKT) is G1. Residue 19-26 (GHVDHGKT) participates in GTP binding. Residue threonine 26 participates in Mg(2+) binding. Positions 61–65 (GITIN) are G2. The G3 stretch occupies residues 82–85 (DCPG). Residues 82-86 (DCPGH) and 137-140 (NKKD) each bind GTP. A G4 region spans residues 137–140 (NKKD). Residues 175–177 (SAL) form a G5 region.

The protein belongs to the TRAFAC class translation factor GTPase superfamily. Classic translation factor GTPase family. EF-Tu/EF-1A subfamily.

It is found in the plastid. The protein resides in the chloroplast. It catalyses the reaction GTP + H2O = GDP + phosphate + H(+). In terms of biological role, GTP hydrolase that promotes the GTP-dependent binding of aminoacyl-tRNA to the A-site of ribosomes during protein biosynthesis. The sequence is that of Elongation factor Tu, chloroplastic (tufA) from Oltmannsiellopsis viridis (Marine flagellate).